Consider the following 252-residue polypeptide: Probable transcriptional regulatory protein Caur_1043 (252 aa).

A compositionally biased stretch (basic residues) spans 1-14 (MSGHSKWHTIRRTK). The interval 1-22 (MSGHSKWHTIRRTKGVNDQRRG) is disordered.

The protein belongs to the TACO1 family.

It is found in the cytoplasm. The protein is Probable transcriptional regulatory protein Caur_1043 of Chloroflexus aurantiacus (strain ATCC 29366 / DSM 635 / J-10-fl).